The following is a 201-amino-acid chain: Putative tRNA-binding protein YtpR (201 aa).

The region spanning 90–200 (VDLSPKFVVG…GDYEAGDAFQ (111 aa)) is the tRNA-binding domain.

The chain is Putative tRNA-binding protein YtpR (ytpR) from Bacillus subtilis (strain 168).